A 2183-amino-acid polypeptide reads, in one-letter code: Coagulation factor V (2183 aa).

Residues 1–19 form the signal peptide; it reads MLLVCPCFFLLVVLGTRWA. 4 consecutive Plastocyanin-like domains span residues 30 to 192, 202 to 328, 347 to 524, and 534 to 682; these read QLRQ…LLIC, TQKM…IKNC, KRWE…LLIC, and VQRV…DVKC. F5/8 type A domains follow at residues 30–328 and 347–682; these read QLRQ…IKNC and KRWE…DVKC. The Ca(2+) site is built by D138 and D139. N176, N238, and N381 each carry an N-linked (GlcNAc...) asparagine glycan. The residue at position 638 (T638) is a Phosphothreonine. The b stretch occupies residues 691–1533; sequence SYEIYEPPAP…PDTIAAWYLR (843 aa). Y692 and Y725 each carry sulfotyrosine. Positions 737-1533 are cleaved as a propeptide — activation peptide (connecting region); it reads SFKNSSLNPE…PDTIAAWYLR (797 aa). N841 is a glycosylation site (N-linked (GlcNAc...) asparagine). 3 disordered regions span residues 884-904, 947-1045, and 1059-1144; these read PAGK…MKSE, DVDK…FPDR, and ETAL…YDLS. Residues 892–908 are 1 X 17 AA tandem repeats; the sequence is SNPKNSYSGMKSEEDIP. One copy of the 1-1 repeat lies at 892-911; the sequence is SNPKNSYSGMKSEEDIPSEL. S903 is modified (phosphoserine). Polar residues predominate over residues 951–975; that stretch reads LTNSPQNQNITVPRGESTSHTNTTR. N959 and N972 each carry an N-linked (GlcNAc...) asparagine glycan. Over residues 1010-1021 the composition is skewed to basic residues; that stretch reads RTRKKKKNKKLA. Composition is skewed to polar residues over residues 1059–1099 and 1120–1134; these read ETAL…SLDL and THST…SPPE. Repeat copies occupy residues 1175-1183, 1184-1192, 1193-1201, 1202-1210, 1211-1219, 1220-1228, 1229-1237, 1238-1246, 1247-1255, 1256-1264, 1265-1273, 1274-1282, 1283-1291, 1292-1299, 1300-1308, 1309-1316, 1317-1325, 1326-1334, 1335-1341, 1342-1350, 1351-1359, 1360-1368, 1369-1377, 1378-1386, 1387-1395, 1396-1404, 1405-1413, 1414-1422, 1423-1431, 1432-1440, 1441-1449, and 1452-1461. The 32 X 9 AA approximate tandem repeats of [TNP]-L-S-P-D-L-S-Q-T stretch occupies residues 1175–1461; sequence IPSSDLSLFT…PSPSPTLNNT (287 aa). The disordered stretch occupies residues 1204–1312; sequence SPEDNQKTSS…PDLGQVPLFP (109 aa). The segment covering 1228-1251 has biased composition (polar residues); that stretch reads KTSSPDLGQVSLSPDDNQKTSSPD. Over residues 1292-1304 the composition is skewed to polar residues; that stretch reads PLSSDNQKTSSPD. Residues 1403-1462 form a disordered region; it reads QTNPALNHGHKASSADPDQASYPPDSGQASSLPELNRTLPHPDLTHIPPPSPSPTLNNTS. The N-linked (GlcNAc...) asparagine glycan is linked to N1438. Plastocyanin-like domains lie at 1538–1711 and 1721–1866; these read HKKF…LLIC and NLPM…DKEC. In terms of domain architecture, F5/8 type A 3 spans 1538–1866; the sequence is HKKFYYIAAE…TPFLIIDKEC (329 aa). H1802 and H1804 together coordinate Cu cation. N-linked (GlcNAc...) asparagine glycosylation occurs at N1811. F5/8 type C domains lie at 1866-2020 and 2025-2180; these read CKMP…LQGC and CSTP…LFGC. Intrachain disulfides connect C1866/C2020 and C2025/C2180.

The protein belongs to the multicopper oxidase family. As to quaternary structure, factor Va, the activated form of factor V, is composed of a heavy chain and a light chain, non-covalently bound. The interaction between the two chains is calcium-dependent. Forms heterodimer with SERPINA5. In terms of processing, thrombin activates factor V proteolytically to the active cofactor, factor Va (formation of a heavy chain at the N-terminus and a light chain at the C-terminus). Post-translationally, sulfation is required for efficient thrombin cleavage and activation and for full procoagulant activity. Activated protein C inactivates factor V and factor Va by proteolytic degradation.

It is found in the secreted. Its activity is regulated as follows. Inhibited by SERPINA5. Its function is as follows. Central regulator of hemostasis. It serves as a critical cofactor for the prothrombinase activity of factor Xa that results in the activation of prothrombin to thrombin. This Mus musculus (Mouse) protein is Coagulation factor V (F5).